The chain runs to 419 residues: GTPase Obg (419 aa).

The Obg domain occupies methionine 1–methionine 156. The 178-residue stretch at alanine 157 to isoleucine 334 folds into the OBG-type G domain. GTP is bound by residues glycine 163–serine 170, phenylalanine 188–valine 192, aspartate 209–glycine 212, asparagine 278–aspartate 281, and asparagine 315–isoleucine 317. Residues serine 170 and threonine 190 each coordinate Mg(2+). One can recognise an OCT domain in the interval isoleucine 342 to asparagine 419.

It belongs to the TRAFAC class OBG-HflX-like GTPase superfamily. OBG GTPase family. As to quaternary structure, monomer. Requires Mg(2+) as cofactor.

Its subcellular location is the cytoplasm. In terms of biological role, an essential GTPase which binds GTP, GDP and possibly (p)ppGpp with moderate affinity, with high nucleotide exchange rates and a fairly low GTP hydrolysis rate. Plays a role in control of the cell cycle, stress response, ribosome biogenesis and in those bacteria that undergo differentiation, in morphogenesis control. The chain is GTPase Obg from Mesomycoplasma hyopneumoniae (strain 7448) (Mycoplasma hyopneumoniae).